The chain runs to 66 residues: Large ribosomal subunit protein bL35 (66 aa).

Over residues 1–16 the composition is skewed to basic residues; that stretch reads MPKQKTHRASAKRFKR. Residues 1-20 form a disordered region; it reads MPKQKTHRASAKRFKRTGSG.

This sequence belongs to the bacterial ribosomal protein bL35 family.

The protein is Large ribosomal subunit protein bL35 of Streptococcus thermophilus (strain CNRZ 1066).